A 435-amino-acid chain; its full sequence is F-box only protein 9 (435 aa).

Residues 1-25 form a disordered region; it reads MAEAEEDCHSDAVRVGDEGHESPAE. The segment covering 7-25 has biased composition (basic and acidic residues); sequence DCHSDAVRVGDEGHESPAE. The TPR repeat unit spans residues 82-115; sequence ARELFLKAVEEEQNGALYEAIKFYRRAMQLVPDI. Ser124 carries the post-translational modification Phosphoserine. The region spanning 173-224 is the F-box domain; the sequence is QTHISVLPMEVLMYIFRWVVSSDLDLRSLEQLSLVCRGFYICARDPEIWRLA.

As to quaternary structure, part of the SCF (SKP1-CUL1-F-box) E3 ubiquitin-protein ligase complex SCF(FBXO9) composed of CUL1, SKP1, RBX1 and FBXO9. Interacts with TTI1 and TELO2; when TTI1 and TELO2 are phosphorylated by CK2.

The protein resides in the cytoplasm. Its pathway is protein modification; protein ubiquitination. Substrate recognition component of a SCF (SKP1-CUL1-F-box protein) E3 ubiquitin-protein ligase complex which mediates the ubiquitination and subsequent proteasomal degradation of target proteins and plays a role in several biological processes such as cell cycle, cell proliferation, or maintenance of chromosome stability. Ubiquitinates mTORC1-bound TTI1 and TELO2 when they are phosphorylated by CK2 following growth factor deprivation, leading to their degradation. In contrast, does not mediate ubiquitination of TTI1 and TELO2 when they are part of the mTORC2 complex. As a consequence, mTORC1 is inactivated to restrain cell growth and protein translation, while mTORC2 is the activated due to the relief of feedback inhibition by mTORC1. Plays a role in maintaining epithelial cell survival by regulating the turn-over of chromatin modulator PRMT4 through ubiquitination and degradation by the proteasomal pathway. Also regulates PPARgamma stability by facilitating PPARgamma/PPARG ubiquitination and thereby plays a role in adipocyte differentiation. This is F-box only protein 9 (Fbxo9) from Rattus norvegicus (Rat).